We begin with the raw amino-acid sequence, 353 residues long: Guanine nucleotide-binding protein alpha-1 subunit (353 aa).

G2 is lipidated: N-myristoyl glycine. C3 is lipidated: S-palmitoyl cysteine. The 322-residue stretch at 32–353 (NEIKMLLLGA…QVNLRDCGLL (322 aa)) folds into the G-alpha domain. The segment at 35–48 (KMLLLGAGESGKST) is G1 motif. Residues E43, S44, G45, K46, S47, T48, D150, L175, T181, G203, N269, K270, D272, and A325 each coordinate GTP. Position 47 (S47) interacts with Mg(2+). The tract at residues 173–181 (DVLRSRVKT) is G2 motif. Residue T181 coordinates Mg(2+). Positions 196 to 205 (YKLFDVGGQR) are G3 motif. A G4 motif region spans residues 265–272 (ILFLNKID). Residues 323–328 (TCATDT) are G5 motif.

It belongs to the G-alpha family. As to quaternary structure, g proteins are composed of 3 units; alpha, beta and gamma. The alpha chain contains the guanine nucleotide binding site. The cofactor is Mg(2+).

In terms of biological role, guanine nucleotide-binding proteins (G proteins) are involved as modulators or transducers in various transmembrane signaling systems. The protein is Guanine nucleotide-binding protein alpha-1 subunit (GPA1) of Mycosarcoma maydis (Corn smut fungus).